Consider the following 220-residue polypeptide: UPF0441 protein Spro_4274 (220 aa).

The segment at Met181–Gly220 is disordered. Over residues Gln203–Gly220 the composition is skewed to low complexity.

Belongs to the UPF0441 family.

The polypeptide is UPF0441 protein Spro_4274 (Serratia proteamaculans (strain 568)).